The sequence spans 318 residues: NADH-ubiquinone oxidoreductase chain 1 (318 aa).

A run of 8 helical transmembrane segments spans residues 3 to 23 (LINV…LTLL), 69 to 89 (LMFT…WIPI), 100 to 120 (LGVL…LWSG), 135 to 155 (AVAQ…SIMM), 171 to 191 (HMWL…STLA), 223 to 243 (FFLA…ILFF), 253 to 273 (ELHT…FLWV), and 293 to 313 (FLPL…TFAG).

This sequence belongs to the complex I subunit 1 family.

It is found in the mitochondrion inner membrane. It catalyses the reaction a ubiquinone + NADH + 5 H(+)(in) = a ubiquinol + NAD(+) + 4 H(+)(out). Core subunit of the mitochondrial membrane respiratory chain NADH dehydrogenase (Complex I) that is believed to belong to the minimal assembly required for catalysis. Complex I functions in the transfer of electrons from NADH to the respiratory chain. The immediate electron acceptor for the enzyme is believed to be ubiquinone. In Dasypus novemcinctus (Nine-banded armadillo), this protein is NADH-ubiquinone oxidoreductase chain 1 (MT-ND1).